The chain runs to 85 residues: Toxin BmKaTX15 (85 aa).

Positions 1-19 are cleaved as a signal peptide; that stretch reads MNYLVFFSLALLVMTGVES. The LCN-type CS-alpha/beta domain maps to 21–83; it reads RDGYIADDKN…VPIRVPGKCN (63 aa). Disulfide bonds link C31/C82, C35/C55, C41/C65, and C45/C67.

It belongs to the long (4 C-C) scorpion toxin superfamily. Sodium channel inhibitor family. Alpha subfamily. In terms of tissue distribution, expressed by the venom gland.

It localises to the secreted. Alpha toxins bind voltage-independently at site-3 of sodium channels (Nav) and inhibit the inactivation of the activated channels, thereby blocking neuronal transmission. This chain is Toxin BmKaTX15, found in Olivierus martensii (Manchurian scorpion).